The sequence spans 3672 residues: Laminin-like protein epi-1 (3672 aa).

Residues 1–27 form the signal peptide; the sequence is MSPYDSSPWATKALFLIVTLLAQFTYS. Residues 28 to 297 form the Laminin N-terminal domain; it reads QVLTPSQITI…AIKEIMIGGR (270 aa). 3 N-linked (GlcNAc...) asparagine glycosylation sites follow: Asn121, Asn140, and Asn249. Intrachain disulfides connect Cys298–Cys307, Cys300–Cys320, Cys322–Cys331, Cys334–Cys354, Cys357–Cys366, Cys359–Cys391, Cys394–Cys403, Cys406–Cys424, Cys427–Cys438, Cys429–Cys445, Cys447–Cys456, Cys459–Cys469, Cys472–Cys484, Cys474–Cys491, Cys493–Cys502, Cys505–Cys516, Cys519–Cys531, Cys521–Cys538, Cys540–Cys549, Cys552–Cys561, Cys564–Cys576, Cys566–Cys583, Cys585–Cys594, Cys597–Cys607, Cys610–Cys622, Cys612–Cys629, Cys631–Cys640, Cys643–Cys653, Cys656–Cys668, Cys658–Cys674, Cys676–Cys685, Cys688–Cys698, Cys701–Cys715, Cys703–Cys724, Cys726–Cys735, Cys738–Cys753, Cys756–Cys770, Cys758–Cys777, Cys779–Cys788, Cys791–Cys806, Cys809–Cys821, Cys811–Cys828, and Cys830–Cys839. 10 Laminin EGF-like domains span residues 298-356, 357-426, 427-471, 472-518, 519-563, 564-609, 610-655, 656-700, 701-755, and 756-808; these read CVCN…TCEA, CNCF…PCKV, CDCD…KCKP, CECN…GCVE, CVCD…DCKF, CNCD…NCKA, CACD…DCRG, CECL…ICEE, CNCN…GCRS, and CDCN…GCES. The N-linked (GlcNAc...) asparagine glycan is linked to Asn351. Asn477 is a glycosylation site (N-linked (GlcNAc...) asparagine). N-linked (GlcNAc...) asparagine glycans are attached at residues Asn511 and Asn530. Residue Asn634 is glycosylated (N-linked (GlcNAc...) asparagine). Residue Asn761 is glycosylated (N-linked (GlcNAc...) asparagine). In terms of domain architecture, Laminin EGF-like 11; truncated spans 809–839; that stretch reads CHCDIGGALRAECDITSGQCKCRPRVTGLRC. N-linked (GlcNAc...) asparagine glycans are attached at residues Asn1014 and Asn1341. 16 disulfides stabilise this stretch: Cys1415–Cys1427, Cys1417–Cys1434, Cys1436–Cys1445, Cys1448–Cys1458, Cys1461–Cys1469, Cys1463–Cys1476, Cys1478–Cys1487, Cys1490–Cys1503, Cys1506–Cys1520, Cys1508–Cys1527, Cys1529–Cys1538, Cys1541–Cys1551, Cys1554–Cys1566, Cys1556–Cys1573, Cys1575–Cys1584, and Cys1587–Cys1602. Laminin EGF-like domains follow at residues 1415–1460, 1461–1505, 1506–1553, and 1554–1604; these read CDCV…ECIK, CQCN…GCQK, CGCH…HCYG, and CSCN…GCVN. The region spanning 1605 to 1614 is the Laminin EGF-like 16; first part domain; that stretch reads CFCFGVTDSC. The 182-residue stretch at 1615 to 1796 folds into the Laminin IV type A domain; it reads RSSMYPVTIM…SVIKASSVEQ (182 aa). N-linked (GlcNAc...) asparagine glycans are attached at residues Asn1705 and Asn1756. Positions 1797-1829 constitute a Laminin EGF-like 16; second part domain; that stretch reads CQCPAPYTGPSCQLCASGYHRVQSGSFLGACVP. 24 cysteine pairs are disulfide-bonded: Cys1830/Cys1839, Cys1832/Cys1846, Cys1849/Cys1858, Cys1861/Cys1877, Cys1880/Cys1894, Cys1882/Cys1905, Cys1907/Cys1916, Cys1919/Cys1934, Cys1937/Cys1951, Cys1939/Cys1958, Cys1961/Cys1970, Cys1973/Cys1987, Cys1990/Cys2000, Cys1992/Cys2007, Cys2009/Cys2018, Cys2021/Cys2031, Cys2037/Cys2048, Cys2039/Cys2055, Cys2057/Cys2066, Cys2069/Cys2081, Cys2084/Cys2096, Cys2086/Cys2103, Cys2105/Cys2114, and Cys2117/Cys2129. 6 Laminin EGF-like domains span residues 1830–1879, 1880–1936, 1937–1989, 1990–2036, 2037–2083, and 2084–2131; these read CECN…DCMA, CACP…SCSP, CQCN…NCSS, CECS…GCQG, CHCG…GCDK, and CDCE…GCRR. Asn1868 is a glycosylation site (N-linked (GlcNAc...) asparagine). An N-linked (GlcNAc...) asparagine glycan is attached at Asn1944. Residue Asn1986 is glycosylated (N-linked (GlcNAc...) asparagine). Asn2002 carries N-linked (GlcNAc...) asparagine glycosylation. Asn2159, Asn2207, Asn2231, Asn2235, Asn2401, Asn2421, Asn2487, and Asn2821 each carry an N-linked (GlcNAc...) asparagine glycan. 3 Laminin G-like domains span residues 2693–2884, 2896–3066, and 3072–3235; these read GAHF…VNGA, ELVV…RSGC, and RTVS…LNGC. Cys3040 and Cys3066 form a disulfide bridge. The N-linked (GlcNAc...) asparagine glycan is linked to Asn3087. Cys3209 and Cys3235 are joined by a disulfide. Residues 3236 to 3294 are disordered; that stretch reads SLSDDENISTTTTAAPKPTDDSDVAVLPIDEEEESTTTTTTTTTEEPTEEPAEARPDGH. The N-linked (GlcNAc...) asparagine glycan is linked to Asn3242. Low complexity predominate over residues 3271–3280; the sequence is TTTTTTTTTE. Laminin G-like domains lie at 3310–3482 and 3488–3669; these read GFNF…TEQC and PGMY…RNAC. The cysteines at positions 3460 and 3482 are disulfide-linked. An N-linked (GlcNAc...) asparagine glycan is attached at Asn3541. A disulfide bond links Cys3633 and Cys3669.

In terms of assembly, laminin is a complex glycoprotein, consisting of three different polypeptide chains (alpha, beta, gamma), which are bound to each other by disulfide bonds into a cross-shaped molecule comprising one long and three short arms with globules at each end.

Its subcellular location is the secreted. It localises to the extracellular space. The protein localises to the extracellular matrix. The protein resides in the basement membrane. Functionally, binding to cells via a high affinity receptor, laminin is thought to mediate the attachment, migration and organization of cells into tissues during embryonic development by interacting with other extracellular matrix components. Required to assemble a stable basement membrane and for organizing receptor complexes and cytoskeletal components to the proper cell surfaces. During embryogenesis, does not require the presence of collagen type IV in order to associate with cell surfaces, prior to assembly of the prototypical basement membrane. During the formation of neuromuscular junctions at the larval stage, negatively regulates membrane protrusion from body wall muscles, probably downstream of the integrin complex formed by pat-2 and pat-3. Probably plays a distinct role from the related laminin subunit alpha lam-3. The polypeptide is Laminin-like protein epi-1 (epi-1) (Caenorhabditis elegans).